Here is a 233-residue protein sequence, read N- to C-terminus: Orotidine 5'-phosphate decarboxylase (233 aa).

Substrate-binding positions include Asp12, Lys34, 61-70 (DWKLHDIGAT), Thr116, Arg181, Gln190, Gly210, and Arg211. Lys63 (proton donor) is an active-site residue.

The protein belongs to the OMP decarboxylase family. Type 1 subfamily. As to quaternary structure, homodimer.

It catalyses the reaction orotidine 5'-phosphate + H(+) = UMP + CO2. It participates in pyrimidine metabolism; UMP biosynthesis via de novo pathway; UMP from orotate: step 2/2. Catalyzes the decarboxylation of orotidine 5'-monophosphate (OMP) to uridine 5'-monophosphate (UMP). The polypeptide is Orotidine 5'-phosphate decarboxylase (Caulobacter vibrioides (strain ATCC 19089 / CIP 103742 / CB 15) (Caulobacter crescentus)).